Here is a 1293-residue protein sequence, read N- to C-terminus: DNA-directed RNA polymerase subunit beta' (1293 aa).

Residues Cys60, Cys62, Cys75, and Cys78 each contribute to the Zn(2+) site. Positions 535, 537, and 539 each coordinate Mg(2+). The Zn(2+) site is built by Cys877, Cys953, Cys960, and Cys963.

This sequence belongs to the RNA polymerase beta' chain family. The RNAP catalytic core consists of 2 alpha, 1 beta, 1 beta' and 1 omega subunit. When a sigma factor is associated with the core the holoenzyme is formed, which can initiate transcription. The cofactor is Mg(2+). Requires Zn(2+) as cofactor.

The enzyme catalyses RNA(n) + a ribonucleoside 5'-triphosphate = RNA(n+1) + diphosphate. Its function is as follows. DNA-dependent RNA polymerase catalyzes the transcription of DNA into RNA using the four ribonucleoside triphosphates as substrates. This Kineococcus radiotolerans (strain ATCC BAA-149 / DSM 14245 / SRS30216) protein is DNA-directed RNA polymerase subunit beta'.